Reading from the N-terminus, the 413-residue chain is MGARSKEARHRWFSRLPPDASSSFLPCKRPKSVAFVLWIRPSCFLRESLPAELSGLPGLPLPPQAPTNTMNCGLPEAALSVIDWGRLKSGDVNEGARLLSACDDQGFFYLDLSSEPSFLHDHKSVLHFMDQYFHQGLADKMKDDRQSDTHGYEPVATSTGALNTLPDYYESLKASRDELHGDGRNLAPAVCDRQDLFLRFSDMMHQMVIAILQELDCQLGFGGDRASFQDFHRKDAESLTTLSMFRYPKQETLDLGVGHNKHTDIGTLTFLLCDQWGLQVLSKDPAGWRFVAPREGHAVINVGDTLRFLSGNRFRSAVHRVIPTQRLQHEDRYSIAYFLRAANDTQFTDSAGRQVSAKQWHDEKFDVFRETHEEQEKMPILTGGMERLENLPGIWCGVRLTDGICHRLGAEDC.

The Fe2OG dioxygenase domain maps to 235–341 (DAESLTTLSM…RYSIAYFLRA (107 aa)). Residues His-262, Asp-264, and His-319 each contribute to the Fe cation site. Arg-332 is a 2-oxoglutarate binding site.

The protein belongs to the iron/ascorbate-dependent oxidoreductase family.

It functions in the pathway secondary metabolite biosynthesis; terpenoid biosynthesis. In terms of biological role, oxidoreductase; part of the gene cluster that mediates the biosynthesis of viridicatumtoxin, a tetracycline-like fungal meroterpenoid with a unique, fused spirobicyclic ring system. The first step of the pathway is the production of the malonamoyl-CoA starter unit for the polyketide synthase vrtA. The aldolase vrtJ may be involved in the synthesis of the malonamate substrate for malonamoyl-CoA synthetase vrtB. The polyketide synthase vrtA then may utilize the malonamoyl-CoA starter unit, followed by sequential condensation of eight malonyl-CoA units to form the polyketide backbone. The cyclization of the last ring could be mediated by the lactamase-like protein vrtG. The proposed post-PKS tailoring steps are a hydroxylation at C5 catalyzed the cytochrome P450 monooxygenase vrtE, a hydroxylation at C12a catalyzed by VrtH and/or VrtI, and an O-methylation by the O-methyltransferase vrtF. VrtC is then proposed to catalyze the transfer of a geranyl group synthesized by vrtD to the aromatic C ring of the tetracyclic polyketide intermediate of viridicatumtoxin to yield previridicatumtoxin. Finally, the cytochrome P450 monooxygenase vrtK catalyzes the spirocyclization of the geranyl moiety of previridicatumtoxin to afford viridicatumtoxin. This is Oxidoreductase vrtI from Penicillium aethiopicum.